The primary structure comprises 469 residues: Receptor-type adenylate cyclase (469 aa).

The Extracellular portion of the chain corresponds to V1 to A59. Residue N31 is glycosylated (N-linked (GlcNAc...) asparagine). The helical transmembrane segment at L60–V80 threads the bilayer. Residues P81–S469 are Cytoplasmic-facing. In terms of domain architecture, Guanylate cyclase spans T103–E257. Mg(2+)-binding residues include D108 and D151.

This sequence belongs to the adenylyl cyclase class-3 family. Mg(2+) serves as cofactor.

It localises to the cell membrane. It catalyses the reaction ATP = 3',5'-cyclic AMP + diphosphate. In terms of biological role, could act as a receptor for an unknown ligand. The chain is Receptor-type adenylate cyclase (ESAG4C) from Trypanosoma equiperdum.